Consider the following 324-residue polypeptide: Acetyl-coenzyme A carboxylase carboxyl transferase subunit alpha (324 aa).

Positions 37 to 291 (ILEEKLENLE…DLMIQKTFQQ (255 aa)) constitute a CoA carboxyltransferase C-terminal domain.

Belongs to the AccA family. In terms of assembly, acetyl-CoA carboxylase is a heterohexamer composed of biotin carboxyl carrier protein (AccB), biotin carboxylase (AccC) and two subunits each of ACCase subunit alpha (AccA) and ACCase subunit beta (AccD).

It is found in the cytoplasm. It catalyses the reaction N(6)-carboxybiotinyl-L-lysyl-[protein] + acetyl-CoA = N(6)-biotinyl-L-lysyl-[protein] + malonyl-CoA. The protein operates within lipid metabolism; malonyl-CoA biosynthesis; malonyl-CoA from acetyl-CoA: step 1/1. Component of the acetyl coenzyme A carboxylase (ACC) complex. First, biotin carboxylase catalyzes the carboxylation of biotin on its carrier protein (BCCP) and then the CO(2) group is transferred by the carboxyltransferase to acetyl-CoA to form malonyl-CoA. This is Acetyl-coenzyme A carboxylase carboxyl transferase subunit alpha from Bacillus cereus (strain ATCC 14579 / DSM 31 / CCUG 7414 / JCM 2152 / NBRC 15305 / NCIMB 9373 / NCTC 2599 / NRRL B-3711).